The sequence spans 142 residues: Large ribosomal subunit protein uL13 (142 aa).

It belongs to the universal ribosomal protein uL13 family. In terms of assembly, part of the 50S ribosomal subunit.

This protein is one of the early assembly proteins of the 50S ribosomal subunit, although it is not seen to bind rRNA by itself. It is important during the early stages of 50S assembly. In Trichlorobacter lovleyi (strain ATCC BAA-1151 / DSM 17278 / SZ) (Geobacter lovleyi), this protein is Large ribosomal subunit protein uL13.